A 330-amino-acid polypeptide reads, in one-letter code: Ketol-acid reductoisomerase (NADP(+)) (330 aa).

Positions 3 to 184 constitute a KARI N-terminal Rossmann domain; it reads LPVYYDKDID…GGGRMGVLKT (182 aa). NADP(+) is bound by residues 26–29, serine 52, and serine 54; that span reads YGAQ. Histidine 109 is a catalytic residue. Glycine 135 provides a ligand contact to NADP(+). The 145-residue stretch at 185-329 folds into the KARI C-terminal knotted domain; the sequence is SFKEECESDL…EILRAPFNHK (145 aa). Residues aspartate 193, glutamate 197, glutamate 229, and glutamate 233 each coordinate Mg(2+). A substrate-binding site is contributed by serine 254.

The protein belongs to the ketol-acid reductoisomerase family. It depends on Mg(2+) as a cofactor.

It catalyses the reaction (2R)-2,3-dihydroxy-3-methylbutanoate + NADP(+) = (2S)-2-acetolactate + NADPH + H(+). It carries out the reaction (2R,3R)-2,3-dihydroxy-3-methylpentanoate + NADP(+) = (S)-2-ethyl-2-hydroxy-3-oxobutanoate + NADPH + H(+). It participates in amino-acid biosynthesis; L-isoleucine biosynthesis; L-isoleucine from 2-oxobutanoate: step 2/4. The protein operates within amino-acid biosynthesis; L-valine biosynthesis; L-valine from pyruvate: step 2/4. Its function is as follows. Involved in the biosynthesis of branched-chain amino acids (BCAA). Catalyzes an alkyl-migration followed by a ketol-acid reduction of (S)-2-acetolactate (S2AL) to yield (R)-2,3-dihydroxy-isovalerate. In the isomerase reaction, S2AL is rearranged via a Mg-dependent methyl migration to produce 3-hydroxy-3-methyl-2-ketobutyrate (HMKB). In the reductase reaction, this 2-ketoacid undergoes a metal-dependent reduction by NADPH to yield (R)-2,3-dihydroxy-isovalerate. This is Ketol-acid reductoisomerase (NADP(+)) from Helicobacter pylori (strain HPAG1).